The primary structure comprises 250 residues: uncharacterized protein (250 aa).

The protein belongs to the carbohydrate kinase PfkB family.

This is an uncharacterized protein from Archaeoglobus fulgidus (strain ATCC 49558 / DSM 4304 / JCM 9628 / NBRC 100126 / VC-16).